The chain runs to 199 residues: FMN-dependent NADH:quinone oxidoreductase 4 (199 aa).

Residues S10, 95–98 (MYNL), and 139–142 (SRGG) each bind FMN.

The protein belongs to the azoreductase type 1 family. As to quaternary structure, homodimer. Requires FMN as cofactor.

The enzyme catalyses 2 a quinone + NADH + H(+) = 2 a 1,4-benzosemiquinone + NAD(+). It catalyses the reaction N,N-dimethyl-1,4-phenylenediamine + anthranilate + 2 NAD(+) = 2-(4-dimethylaminophenyl)diazenylbenzoate + 2 NADH + 2 H(+). Quinone reductase that provides resistance to thiol-specific stress caused by electrophilic quinones. Functionally, also exhibits azoreductase activity. Catalyzes the reductive cleavage of the azo bond in aromatic azo compounds to the corresponding amines. The sequence is that of FMN-dependent NADH:quinone oxidoreductase 4 from Burkholderia lata (strain ATCC 17760 / DSM 23089 / LMG 22485 / NCIMB 9086 / R18194 / 383).